The primary structure comprises 100 residues: Elicitin Vex2 (100 aa).

3 cysteine pairs are disulfide-bonded: C3-C71, C27-C56, and C51-C95.

It belongs to the elicitin family.

It is found in the secreted. Its function is as follows. Induces local and distal defense responses (incompatible hypersensitive reaction) in plants from the solanaceae and cruciferae families. Elicits leaf necrosis and causes the accumulation of pathogenesis-related proteins. Might interact with the lipidic molecules of the plasma membrane. This Phytopythium vexans (Damping-off fungus) protein is Elicitin Vex2.